The chain runs to 245 residues: MSVNSKLYEGKAKILYTTDDPEVLLADFKDDATAFNAQKRGSIQGKGKINCSISSQLFKQLEAYGIKTHFIDSPTPNQMLVKAVKILPLEVVIRNIAAGSLCQQTGLPVGTILKQPLVEFYYKNDHLGDPLLTRDRLYLLELATAEQVDAITHLALQINEFLNKFWQQCGITLVDFKLEFGLDSQQQLLLADEISPDTCRLWDTTEEDSNRRIMDKDRFRRDLGNVEDAYQEVLQRVLKAVETTN.

It belongs to the SAICAR synthetase family.

It carries out the reaction 5-amino-1-(5-phospho-D-ribosyl)imidazole-4-carboxylate + L-aspartate + ATP = (2S)-2-[5-amino-1-(5-phospho-beta-D-ribosyl)imidazole-4-carboxamido]succinate + ADP + phosphate + 2 H(+). The protein operates within purine metabolism; IMP biosynthesis via de novo pathway; 5-amino-1-(5-phospho-D-ribosyl)imidazole-4-carboxamide from 5-amino-1-(5-phospho-D-ribosyl)imidazole-4-carboxylate: step 1/2. In Nostoc punctiforme (strain ATCC 29133 / PCC 73102), this protein is Phosphoribosylaminoimidazole-succinocarboxamide synthase.